Reading from the N-terminus, the 291-residue chain is Small ribosomal subunit protein uS2 (291 aa).

The segment at 256–291 (LRGEGTAPAASEEQPAEEPAPAAAEAQTDAAVGTAV) is disordered. Residues 261 to 291 (TAPAASEEQPAEEPAPAAAEAQTDAAVGTAV) are compositionally biased toward low complexity.

Belongs to the universal ribosomal protein uS2 family.

In Frankia alni (strain DSM 45986 / CECT 9034 / ACN14a), this protein is Small ribosomal subunit protein uS2.